A 188-amino-acid polypeptide reads, in one-letter code: Glutamyl endopeptidase 2 (188 aa).

A disulfide bridge connects residues cysteine 14 and cysteine 34. Catalysis depends on charge relay system residues histidine 33, aspartate 62, and serine 143. Cysteine 137 and cysteine 163 are oxidised to a cystine.

This sequence belongs to the peptidase S1 family. Monomer.

It carries out the reaction Preferential cleavage: -Glu-|-Xaa- &gt;&gt; -Asp-|-Xaa-. Preference for Pro or Leu at P2 and Phe at P3. Cleavage of -Glu-|-Asp- and -Glu-|-Pro- bonds is slow.. Preferentially cleaves peptide bonds on the carboxyl-terminal side of glutamate. In Streptomyces griseus, this protein is Glutamyl endopeptidase 2 (sprE).